Reading from the N-terminus, the 197-residue chain is Imidazoleglycerol-phosphate dehydratase (197 aa).

The protein belongs to the imidazoleglycerol-phosphate dehydratase family.

Its subcellular location is the cytoplasm. The catalysed reaction is D-erythro-1-(imidazol-4-yl)glycerol 3-phosphate = 3-(imidazol-4-yl)-2-oxopropyl phosphate + H2O. The protein operates within amino-acid biosynthesis; L-histidine biosynthesis; L-histidine from 5-phospho-alpha-D-ribose 1-diphosphate: step 6/9. The sequence is that of Imidazoleglycerol-phosphate dehydratase from Xanthobacter autotrophicus (strain ATCC BAA-1158 / Py2).